We begin with the raw amino-acid sequence, 124 residues long: Small ribosomal subunit protein uS12 (124 aa).

Asp89 is modified (3-methylthioaspartic acid).

The protein belongs to the universal ribosomal protein uS12 family. Part of the 30S ribosomal subunit. Contacts proteins S8 and S17. May interact with IF1 in the 30S initiation complex.

Its function is as follows. With S4 and S5 plays an important role in translational accuracy. Interacts with and stabilizes bases of the 16S rRNA that are involved in tRNA selection in the A site and with the mRNA backbone. Located at the interface of the 30S and 50S subunits, it traverses the body of the 30S subunit contacting proteins on the other side and probably holding the rRNA structure together. The combined cluster of proteins S8, S12 and S17 appears to hold together the shoulder and platform of the 30S subunit. This Yersinia pestis (strain Pestoides F) protein is Small ribosomal subunit protein uS12.